Here is a 329-residue protein sequence, read N- to C-terminus: Glycerol-3-phosphate dehydrogenase [NAD(P)+] (329 aa).

NADPH contacts are provided by S10, W11, R31, and K105. The sn-glycerol 3-phosphate site is built by K105, G134, and S136. A138 is an NADPH binding site. 5 residues coordinate sn-glycerol 3-phosphate: K189, D242, S252, R253, and N254. K189 functions as the Proton acceptor in the catalytic mechanism. NADPH is bound at residue R253. Positions 277 and 279 each coordinate NADPH.

This sequence belongs to the NAD-dependent glycerol-3-phosphate dehydrogenase family.

The protein localises to the cytoplasm. It carries out the reaction sn-glycerol 3-phosphate + NAD(+) = dihydroxyacetone phosphate + NADH + H(+). The enzyme catalyses sn-glycerol 3-phosphate + NADP(+) = dihydroxyacetone phosphate + NADPH + H(+). The protein operates within membrane lipid metabolism; glycerophospholipid metabolism. Its function is as follows. Catalyzes the reduction of the glycolytic intermediate dihydroxyacetone phosphate (DHAP) to sn-glycerol 3-phosphate (G3P), the key precursor for phospholipid synthesis. This Neisseria meningitidis serogroup C (strain 053442) protein is Glycerol-3-phosphate dehydrogenase [NAD(P)+].